Consider the following 2541-residue polypeptide: Talin-1 (2541 aa).

Residues R86–K403 form the FERM domain. T167 bears the Phosphothreonine mark. Residues F280 to Q435 form an interaction with LAYN region. 5 positions are modified to phosphoserine: S405, S425, S446, S620, and S729. Residues R482–I655 form a helical bundle R1 region. Residues G656–K786 form a helical bundle R2 region. The interval A787–K911 is helical bundle R3. The helical bundle R4 stretch occupies residues L913–A1044. A Phosphoserine modification is found at S1021. The tract at residues G1046–Q1206 is helical bundle R5. Y1116 carries the phosphotyrosine modification. Residue T1142 is modified to Phosphothreonine. A phosphoserine mark is found at S1201 and S1225. Positions R1207–A1357 are helical bundle R6. The residue at position 1263 (T1263) is a Phosphothreonine. Phosphoserine is present on S1323. Residues A1327 to K1948 are interaction with SYNM. The helical bundle R7A stretch occupies residues P1358 to N1453. Residues G1359–L1659 form an interaction with VCL and F-actin region. The tract at residues L1461–E1580 is helical bundle R8. K1544 carries the post-translational modification N6-acetyllysine. The segment at F1581–D1653 is helical bundle R7B. A helical bundle R9 region spans residues A1655–G1822. The helical bundle R10 stretch occupies residues V1823–R1973. The residue at position 1849 (S1849) is a Phosphoserine. Position 1855 is a phosphothreonine (T1855). S1878 is modified (phosphoserine). The helical bundle R11 stretch occupies residues G1974–T2140. K2031 carries the N6-acetyllysine modification. Residue S2040 is modified to Phosphoserine. K2115 carries the post-translational modification N6-acetyllysine. The interval K2141–E2294 is helical bundle R12. An I/LWEQ domain is found at T2293 to L2533. The interval D2300–E2482 is helical bundle R13.

In terms of assembly, part of a complex composed of THSD1, PTK2/FAK1, TLN1 and VCL. Interacts with THSD1; this promotes interaction with PTK2/FAK1 and VCL. Binds with high affinity to VCL and with low affinity to integrins. Interacts with APBB1IP; this inhibits VCL binding. Interacts with PTK2/FAK1. Interacts with PIP5K1C and NRAP. Interacts with LAYN. Interacts with SYNM. Interacts with ITGB1; the interaction is prevented by competitive binding of ITGB1BP1. Interacts with SVEP1. Interacts (via R7 domain) with KANK1 or KANK2 (via KN motif); this interaction likely initiates the assembly of cortical microtubule stabilization complexes (CMSCs) at the vicinity of focal adhesions. As to quaternary structure, interacts with VCL; shows reduced VCL binding compared to isoform 2. Interacts with APBB1IP; shows similar level of binding compared to isoform 2. Interacts with VCL; shows enhanced VCL binding compared to isoform 1. Interacts with APBB1IP; shows similar level of binding compared to isoform 1. In terms of assembly, (Microbial infection) Interacts with human cytomegalovirus protein UL135. In terms of tissue distribution, expressed at low to non-detectable levels in many tissues but highly expressed in skin and pancreas with other tissues including kidney cortex, endocervix, testis, pituitary, liver, and spleen also showing robust expression.

The protein localises to the cell projection. The protein resides in the ruffle membrane. Its subcellular location is the cytoplasm. It is found in the cytoskeleton. It localises to the cell surface. The protein localises to the cell junction. The protein resides in the focal adhesion. In terms of biological role, high molecular weight cytoskeletal protein concentrated at regions of cell-matrix and cell-cell contacts. Involved in connections of major cytoskeletal structures to the plasma membrane. With KANK1 co-organize the assembly of cortical microtubule stabilizing complexes (CMSCs) positioned to control microtubule-actin crosstalk at focal adhesions (FAs) rims. In Homo sapiens (Human), this protein is Talin-1 (TLN1).